The chain runs to 194 residues: Alkyl hydroperoxide reductase AhpD (194 aa).

Catalysis depends on C132, which acts as the Proton donor. The cysteines at positions 132 and 135 are disulfide-linked. Residue C135 is the Cysteine sulfenic acid (-SOH) intermediate of the active site.

This sequence belongs to the AhpD family.

The catalysed reaction is N(6)-[(R)-dihydrolipoyl]-L-lysyl-[lipoyl-carrier protein] + a hydroperoxide = N(6)-[(R)-lipoyl]-L-lysyl-[lipoyl-carrier protein] + an alcohol + H2O. In terms of biological role, antioxidant protein with alkyl hydroperoxidase activity. Required for the reduction of the AhpC active site cysteine residues and for the regeneration of the AhpC enzyme activity. In Koribacter versatilis (strain Ellin345), this protein is Alkyl hydroperoxide reductase AhpD.